Reading from the N-terminus, the 90-residue chain is DNA-directed RNA polymerase subunit omega (90 aa).

The tract at residues 70–90 is disordered; it reads QEQQEQEAAELAAVSSIMHNR.

The protein belongs to the RNA polymerase subunit omega family. In terms of assembly, the RNAP catalytic core consists of 2 alpha, 1 beta, 1 beta' and 1 omega subunit. When a sigma factor is associated with the core the holoenzyme is formed, which can initiate transcription.

The enzyme catalyses RNA(n) + a ribonucleoside 5'-triphosphate = RNA(n+1) + diphosphate. Its function is as follows. Promotes RNA polymerase assembly. Latches the N- and C-terminal regions of the beta' subunit thereby facilitating its interaction with the beta and alpha subunits. The polypeptide is DNA-directed RNA polymerase subunit omega (Vibrio cholerae serotype O1 (strain ATCC 39541 / Classical Ogawa 395 / O395)).